A 142-amino-acid chain; its full sequence is Large ribosomal subunit protein uL11 (142 aa).

Positions 86 to 105 (LKSGSKEPGKQSAGQISRAK) are disordered.

The protein belongs to the universal ribosomal protein uL11 family. Part of the ribosomal stalk of the 50S ribosomal subunit. Interacts with L10 and the large rRNA to form the base of the stalk. L10 forms an elongated spine to which L12 dimers bind in a sequential fashion forming a multimeric L10(L12)X complex. One or more lysine residues are methylated.

Forms part of the ribosomal stalk which helps the ribosome interact with GTP-bound translation factors. The polypeptide is Large ribosomal subunit protein uL11 (Chelativorans sp. (strain BNC1)).